The following is a 338-amino-acid chain: tRNA(Ile)-lysidine synthase (338 aa).

23–28 (SGGLDS) is an ATP binding site.

The protein belongs to the tRNA(Ile)-lysidine synthase family.

Its subcellular location is the cytoplasm. The enzyme catalyses cytidine(34) in tRNA(Ile2) + L-lysine + ATP = lysidine(34) in tRNA(Ile2) + AMP + diphosphate + H(+). Functionally, ligates lysine onto the cytidine present at position 34 of the AUA codon-specific tRNA(Ile) that contains the anticodon CAU, in an ATP-dependent manner. Cytidine is converted to lysidine, thus changing the amino acid specificity of the tRNA from methionine to isoleucine. This is tRNA(Ile)-lysidine synthase from Helicobacter pylori (strain J99 / ATCC 700824) (Campylobacter pylori J99).